The following is a 483-amino-acid chain: Zinc finger CCCH domain-containing protein 25 (483 aa).

The segment at 157-184 adopts a C3H1-type zinc-finger fold; that stretch reads RNRAHICSFFIRGECTRGDECPYRHEMP. One can recognise an RRM domain in the interval 228-301; it reads RTLYVGGLNS…QRLKLTWGRP (74 aa). Disordered regions lie at residues 298–317 and 336–483; these read WGRP…QGSV and PPML…GSSQ. Residues 336 to 351 show a composition bias toward pro residues; the sequence is PPMLQYYMHPPPPQPP. The segment covering 370 to 380 has biased composition (low complexity); the sequence is SSSKESGSSTS. A compositionally biased stretch (polar residues) spans 381-391; it reads DNRGASSSSYT. Low complexity-rich tracts occupy residues 392–401 and 409–423; these read MPPHGHYPQH and YGGY…YPPY. Pro residues predominate over residues 438-459; that stretch reads QPGPGSRPNPPHPSSVSAPPPD. Residues 460–476 are compositionally biased toward low complexity; that stretch reads SVSAAPSGSSQQSADAA.

The protein is Zinc finger CCCH domain-containing protein 25 of Arabidopsis thaliana (Mouse-ear cress).